Consider the following 235-residue polypeptide: MAHGRNIRKRTFSVMDTLSDKNIGIHTNSLPKNILCRRILFKGKISKYSIFNDNLAKDHSSNRSMSIDSLTGKKRPHDISFQNMNSSMPSSTQKKTKILDEEIKDQSSSNENDRDSPVIVDITLKPSYMPKTSRITEIIHKMKELNMNRIEDGLSFNKKRSEHDAKNVLLHTMEMEEDCEIEEDIAIDSPYLNTSLSEDDTESIVETDYSEEEKESISETESSSDDESYSLYDSF.

Disordered stretches follow at residues 60 to 96 and 192 to 235; these read SSNR…QKKT and LNTS…YDSF. The span at 80-93 shows a compositional bias: polar residues; that stretch reads SFQNMNSSMPSSTQ. The span at 197-214 shows a compositional bias: acidic residues; it reads SEDDTESIVETDYSEEEK.

Belongs to the asfivirus DP238L family.

This is an uncharacterized protein from Ornithodoros (relapsing fever ticks).